A 250-amino-acid chain; its full sequence is Small ribosomal subunit protein uS3 (250 aa).

A KH type-2 domain is found at 16-85; it reads IDEYLEKELE…NPQIEVKEVS (70 aa).

Belongs to the universal ribosomal protein uS3 family. As to quaternary structure, part of the 30S ribosomal subunit.

Functionally, binds the lower part of the 30S subunit head. The polypeptide is Small ribosomal subunit protein uS3 (Methanobrevibacter smithii (strain ATCC 35061 / DSM 861 / OCM 144 / PS)).